A 212-amino-acid chain; its full sequence is uncharacterized protein (212 aa).

Belongs to the mimivirus R683/R861 family.

This is an uncharacterized protein from Acanthamoeba polyphaga (Amoeba).